A 70-amino-acid chain; its full sequence is Small ribosomal subunit protein bS21 (70 aa).

Belongs to the bacterial ribosomal protein bS21 family.

The polypeptide is Small ribosomal subunit protein bS21 (Campylobacter jejuni subsp. jejuni serotype O:23/36 (strain 81-176)).